The primary structure comprises 76 residues: Protein sprouty homolog 1 (76 aa).

Residues 1 to 52 (NPCSCSQSHCCSRYLCMGAMSLFLPCLLCYPPAKGCLKLCRGCYDRVNRPGC) enclose the SPR domain.

It belongs to the sprouty family. In terms of tissue distribution, brain and interlimb region.

It is found in the cytoplasm. The protein localises to the membrane. Inhibits fibroblast growth factor (FGF)-induced retinal lens fiber differentiation. Inhibits TGFB-induced epithelial-to-mesenchymal transition in lens epithelial cells. This chain is Protein sprouty homolog 1 (SPRY1), found in Gallus gallus (Chicken).